We begin with the raw amino-acid sequence, 197 residues long: Imidazoleglycerol-phosphate dehydratase (197 aa).

The protein belongs to the imidazoleglycerol-phosphate dehydratase family.

It localises to the cytoplasm. The catalysed reaction is D-erythro-1-(imidazol-4-yl)glycerol 3-phosphate = 3-(imidazol-4-yl)-2-oxopropyl phosphate + H2O. The protein operates within amino-acid biosynthesis; L-histidine biosynthesis; L-histidine from 5-phospho-alpha-D-ribose 1-diphosphate: step 6/9. This is Imidazoleglycerol-phosphate dehydratase from Azotobacter vinelandii (strain DJ / ATCC BAA-1303).